Reading from the N-terminus, the 571-residue chain is Proline--tRNA ligase (571 aa).

This sequence belongs to the class-II aminoacyl-tRNA synthetase family. ProS type 1 subfamily. As to quaternary structure, homodimer.

It localises to the cytoplasm. The catalysed reaction is tRNA(Pro) + L-proline + ATP = L-prolyl-tRNA(Pro) + AMP + diphosphate. In terms of biological role, catalyzes the attachment of proline to tRNA(Pro) in a two-step reaction: proline is first activated by ATP to form Pro-AMP and then transferred to the acceptor end of tRNA(Pro). As ProRS can inadvertently accommodate and process non-cognate amino acids such as alanine and cysteine, to avoid such errors it has two additional distinct editing activities against alanine. One activity is designated as 'pretransfer' editing and involves the tRNA(Pro)-independent hydrolysis of activated Ala-AMP. The other activity is designated 'posttransfer' editing and involves deacylation of mischarged Ala-tRNA(Pro). The misacylated Cys-tRNA(Pro) is not edited by ProRS. This Buchnera aphidicola subsp. Schizaphis graminum (strain Sg) protein is Proline--tRNA ligase.